We begin with the raw amino-acid sequence, 113 residues long: Flagellar hook-basal body complex protein FliE (113 aa).

Belongs to the FliE family.

It is found in the bacterial flagellum basal body. This chain is Flagellar hook-basal body complex protein FliE, found in Rhizobium etli (strain CIAT 652).